We begin with the raw amino-acid sequence, 262 residues long: Small ribosomal subunit protein eS1 (262 aa).

Over residues 234–251 (DPKEDSGKNVKSLPESKE) the composition is skewed to basic and acidic residues. The segment at 234–262 (DPKEDSGKNVKSLPESKEATNILTAELKH) is disordered.

This sequence belongs to the eukaryotic ribosomal protein eS1 family. Component of the small ribosomal subunit. Mature ribosomes consist of a small (40S) and a large (60S) subunit. The 40S subunit contains about 33 different proteins and 1 molecule of RNA (18S). The 60S subunit contains about 49 different proteins and 3 molecules of RNA (25S, 5.8S and 5S).

It localises to the cytoplasm. This Plasmodium yoelii yoelii protein is Small ribosomal subunit protein eS1.